The chain runs to 545 residues: Chaperonin GroEL (545 aa).

ATP-binding positions include 30 to 33 (TLGP), Lys-51, 87 to 91 (DGTTT), Gly-415, 483 to 485 (NAA), and Asp-499.

Belongs to the chaperonin (HSP60) family. In terms of assembly, forms a cylinder of 14 subunits composed of two heptameric rings stacked back-to-back. Interacts with the co-chaperonin GroES.

It localises to the cytoplasm. The enzyme catalyses ATP + H2O + a folded polypeptide = ADP + phosphate + an unfolded polypeptide.. Together with its co-chaperonin GroES, plays an essential role in assisting protein folding. The GroEL-GroES system forms a nano-cage that allows encapsulation of the non-native substrate proteins and provides a physical environment optimized to promote and accelerate protein folding. In Aquifex aeolicus (strain VF5), this protein is Chaperonin GroEL.